The following is a 367-amino-acid chain: THO complex subunit 6 (367 aa).

7 WD repeats span residues 23 to 67 (IETR…SQSA), 88 to 129 (AHEG…ESDV), 157 to 196 (SPMPEINAMSVDPQSGSVFTAAGDSCAYCWDVESGKIKMT), 199 to 240 (GHSD…KVIG), 243 to 283 (DKKS…CVQT), 285 to 322 (PIPAHVQDVMFDEKQILTVGAEPLLRRFDLNGALLSQI), and 324 to 363 (CAPCSVFSISLHPAGVVAVGGYGGIVDVISQFGSHLCTFR).

It belongs to the WD repeat THOC6 family. Component of the THO complex, which is composed of THO1, THO2, THO3, THO5, THO6 and THO7. Interacts with ABI5, DDB1A and DWA2.

It is found in the nucleus. The protein operates within protein modification; protein ubiquitination. Acts as a component of the THO subcomplex of the TREX complex which is thought to couple mRNA transcription, processing and nuclear export. In terms of biological role, component of the CUL4-RBX1-DDB1-DWA1/DWA2 E3 ubiquitin-protein ligase complex that acts as a negative regulator in abscisic acid (ABA) signaling. May function as the substrate recognition module within this complex leading to ABI5 degradation. Functionally redundant with DWA2. The protein is THO complex subunit 6 (THO6) of Arabidopsis thaliana (Mouse-ear cress).